The primary structure comprises 173 residues: Probable lipoprotein EnvE (173 aa).

Positions 1–20 (MTLLSGKTTLVLCLSSILCG) are cleaved as a signal peptide. Cysteine 21 carries N-palmitoyl cysteine lipidation. Cysteine 21 carries S-diacylglycerol cysteine lipidation.

It is found in the cell membrane. The sequence is that of Probable lipoprotein EnvE (envE) from Salmonella typhimurium (strain LT2 / SGSC1412 / ATCC 700720).